Here is a 270-residue protein sequence, read N- to C-terminus: Cell surface glycoprotein CD200 receptor 4 (270 aa).

The N-terminal stretch at 1 to 25 (MHALGRIPTLTLLIFINIFVSGSSC) is a signal peptide. Positions 26 to 145 (TDENQTIQND…GNLEKVYDLQ (120 aa)) constitute an Ig-like V-type domain. Topologically, residues 26–241 (TDENQTIQND…TMTTPRSLLT (216 aa)) are extracellular. Residues Asn-29 and Asn-44 are each glycosylated (N-linked (GlcNAc...) asparagine). Intrachain disulfides connect Cys-58/Cys-129, Cys-82/Cys-97, Cys-164/Cys-213, and Cys-183/Cys-201. Residues 134–229 (PEGNLEKVYD…GNQSLSIELS (96 aa)) enclose the Ig-like C2-type domain. An N-linked (GlcNAc...) asparagine glycan is attached at Asn-192. A helical membrane pass occupies residues 242 to 262 (ILYVKMALLVIILLNVGFAFF). Topologically, residues 263–270 (QKRNFART) are cytoplasmic.

It belongs to the CD200R family. In terms of assembly, interacts with TYROBP. As to expression, highly expressed in monocytes, NK cells and a subset of NKT cells. Weakly expressed in granulocytes and B-cells (at protein level). Expressed in brain, lung, testis, thymus, intestine and uterus. Expressed in bone marrow derived-macrophage and dendritic cells and mast cells.

It is found in the membrane. Involved in the recruitment or surface expression of the TYROBP receptor. The chain is Cell surface glycoprotein CD200 receptor 4 (Cd200r4) from Mus musculus (Mouse).